A 634-amino-acid chain; its full sequence is Pentatricopeptide repeat-containing protein At5g14080 (634 aa).

13 PPR repeats span residues aspartate 81–leucine 115, aspartate 116–isoleucine 150, histidine 151–leucine 185, asparagine 186–isoleucine 220, glycine 222–proline 256, aspartate 257–proline 291, arginine 292–methionine 326, aspartate 327–proline 360, alanine 361–serine 395, glutamate 396–proline 430, aspartate 431–methionine 465, asparagine 466–proline 500, and aspartate 501–threonine 535.

The protein belongs to the PPR family. P subfamily.

This Arabidopsis thaliana (Mouse-ear cress) protein is Pentatricopeptide repeat-containing protein At5g14080.